The following is a 334-amino-acid chain: Formamidase (334 aa).

One can recognise a CN hydrolase domain in the interval 14-260 (MLMGLVQYPV…WEIVTAEVFP (247 aa)). The active-site Proton acceptor is E60. The active-site Proton donor is K133. Catalysis depends on C166, which acts as the Nucleophile.

Belongs to the carbon-nitrogen hydrolase superfamily. Aliphatic amidase family.

It catalyses the reaction formamide + H2O = formate + NH4(+). Is an aliphatic amidase with a restricted substrate specificity, as it only hydrolyzes formamide. This Nitratidesulfovibrio vulgaris (strain DP4) (Desulfovibrio vulgaris) protein is Formamidase.